The primary structure comprises 513 residues: L-arabinose transport ATP-binding protein AraG (513 aa).

2 ABC transporter domains span residues 6 to 243 (LEMR…GMVG) and 264 to 508 (VKNW…TKTA). Position 38–45 (38–45 (GENGAGKS)) interacts with ATP.

It belongs to the ABC transporter superfamily.

The protein resides in the cell membrane. The enzyme catalyses L-arabinose(out) + ATP + H2O = L-arabinose(in) + ADP + phosphate + H(+). Functionally, part of the binding-protein-dependent transport system for L-arabinose. Probably responsible for energy coupling to the transport system. In Geobacillus stearothermophilus (Bacillus stearothermophilus), this protein is L-arabinose transport ATP-binding protein AraG (araG).